The following is a 350-amino-acid chain: DNA polymerase IV (350 aa).

The UmuC domain maps to 5 to 181; the sequence is IMHYDMDAFY…KKIKIIPGVG (177 aa). 2 residues coordinate Mg(2+): D9 and D99. E100 is an active-site residue.

This sequence belongs to the DNA polymerase type-Y family. Monomer. Requires Mg(2+) as cofactor.

It is found in the cytoplasm. The enzyme catalyses DNA(n) + a 2'-deoxyribonucleoside 5'-triphosphate = DNA(n+1) + diphosphate. In terms of biological role, poorly processive, error-prone DNA polymerase involved in untargeted mutagenesis. Copies undamaged DNA at stalled replication forks, which arise in vivo from mismatched or misaligned primer ends. These misaligned primers can be extended by PolIV. Exhibits no 3'-5' exonuclease (proofreading) activity. May be involved in translesional synthesis, in conjunction with the beta clamp from PolIII. The protein is DNA polymerase IV of Fusobacterium nucleatum subsp. nucleatum (strain ATCC 25586 / DSM 15643 / BCRC 10681 / CIP 101130 / JCM 8532 / KCTC 2640 / LMG 13131 / VPI 4355).